Reading from the N-terminus, the 148-residue chain is Caltractin (148 aa).

EF-hand domains lie at E4 to E39, P40 to E75, D77 to N112, and M113 to F148. The Ca(2+) site is built by D17, D19, S21, T23, E28, D53, D55, S57, T59, and E64. D126, D128, D130, E132, and E137 together coordinate Ca(2+).

This sequence belongs to the centrin family. Ubiquitous.

Its function is as follows. This calcium-binding protein is found in the basal body complexes (the functional homolog of the centrosome in animal cell). In mitotic cells it is specifically associated with the poles of the mitotic spindles at the sites of the duplicated basal body complexes. The sequence is that of Caltractin from Tetraselmis striata (Green microalga).